The sequence spans 96 residues: Neurotoxin 23 (96 aa).

Positions 1-22 (MKNIVIIITVAVLFNLFGESLQ) are cleaved as a signal peptide. Residues 26 to 89 (FETYPLNQDD…FLAEIIDTCN (64 aa)) enclose the LCN-type CS-alpha/beta domain. 3 cysteine pairs are disulfide-bonded: cysteine 40-cysteine 63, cysteine 49-cysteine 68, and cysteine 53-cysteine 70.

This sequence belongs to the long (3 C-C) scorpion toxin superfamily. In terms of tissue distribution, expressed by the venom gland.

Its subcellular location is the secreted. This is Neurotoxin 23 from Lychas mucronatus (Chinese swimming scorpion).